Here is a 168-residue protein sequence, read N- to C-terminus: Large ribosomal subunit protein uL10 (168 aa).

This sequence belongs to the universal ribosomal protein uL10 family. In terms of assembly, part of the ribosomal stalk of the 50S ribosomal subunit. The N-terminus interacts with L11 and the large rRNA to form the base of the stalk. The C-terminus forms an elongated spine to which L12 dimers bind in a sequential fashion forming a multimeric L10(L12)X complex.

Forms part of the ribosomal stalk, playing a central role in the interaction of the ribosome with GTP-bound translation factors. This is Large ribosomal subunit protein uL10 from Pediococcus pentosaceus (strain ATCC 25745 / CCUG 21536 / LMG 10740 / 183-1w).